We begin with the raw amino-acid sequence, 228 residues long: UPF0502 protein Rfer_1648 (228 aa).

This sequence belongs to the UPF0502 family.

This Albidiferax ferrireducens (strain ATCC BAA-621 / DSM 15236 / T118) (Rhodoferax ferrireducens) protein is UPF0502 protein Rfer_1648.